The following is a 278-amino-acid chain: MVPGYTEETVLEVHHWTDKLFTLKTTRSPSFRFANGQFCMMGLVVAGKPLVRAYSLASANHEETLEFFSIKVPNGPLTSRLQHIAVGETILVGKRATGTLTIGNLRPGRTLWLLATGTGLAPFLSVVKDPETYERFERVVITHTCRRVQDLAYARYLEHELAADELLGEIVRPKLRYYPSVTREAFKTEGRITALLESGRIFADLALPALDPAHDRLMLCGSSEMLADTAALLEARGFEEGNSGEPGDYLVEKAFAGEKRSPLASASPAESTNLSGPA.

One can recognise an FAD-binding FR-type domain in the interval 3–103; it reads PGYTEETVLE…KRATGTLTIG (101 aa). Residues 52-55 and Thr-118 each bind FAD; that span reads RAYS.

Belongs to the ferredoxin--NADP reductase type 1 family. The cofactor is FAD.

The catalysed reaction is 2 reduced [4Fe-4S]-[ferredoxin] + NADP(+) + H(+) = 2 oxidized [4Fe-4S]-[ferredoxin] + NADPH. In terms of biological role, transports electrons between NADPH and ferredoxin. Can transfer electrons to ferredoxins Fdx2 and Fdx8. Prefers NADPH to NADH. The chain is Ferredoxin--NADP reductase A from Sorangium cellulosum (strain So ce56) (Polyangium cellulosum (strain So ce56)).